The following is a 448-amino-acid chain: Putative vacuolar cation/proton exchanger 6 (448 aa).

Residues 31 to 81 (MGLVNEVELKSLLEQETDSPQTNAASLMEQGSLRERRAKAPRNSVVQSFKI) are Cytoplasmic-facing. A helical membrane pass occupies residues 82-102 (VILSNKLNLLLPFGPLAILVH). At 103–109 (YLTDNKG) the chain is on the extracellular side. A helical transmembrane segment spans residues 110 to 130 (WFFLLSLVGITPLAERLGYAT). At 131–141 (EQLSCYTGATV) the chain is on the cytoplasmic side. Residues 142–162 (GGLLNATFGNVIELIISIIAL) traverse the membrane as a helical segment. Residues 150–185 (GNVIELIISIIALKNGMIRVVQLTLLGSILSNILLV) are cation selection. Over 163 to 178 (KNGMIRVVQLTLLGSI) the chain is Extracellular. Residues 179–199 (LSNILLVLGCAFFCGGLVFPG) form a helical membrane-spanning segment. The Cytoplasmic portion of the chain corresponds to 200–209 (KDQVFDKRNA). A helical transmembrane segment spans residues 210–230 (VVSSGMLLMAVMGLLFPTFLH). At 231 to 243 (YTHSEVHAGSSEL) the chain is on the extracellular side. A helical transmembrane segment spans residues 244-264 (ALSRFISCIMLVAYAAYLFFQ). At 265-295 (LKSQPSFYTEKTNQNEETSNDDEDPEISKWE) the chain is on the cytoplasmic side. Residues 296–316 (AIIWLSIFTAWVSLLSGYLVD) form a helical membrane-spanning segment. The Extracellular segment spans residues 317-334 (AIEGTSVSWKIPISFISV). Residues 335–355 (ILLPIVGNAAEHAGAIMFAMK) form a helical membrane-spanning segment. The interval 341–376 (GNAAEHAGAIMFAMKDKLDLSLGVAIGSSIQISMFA) is cation selection. Residues 356–363 (DKLDLSLG) lie on the Cytoplasmic side of the membrane. The chain crosses the membrane as a helical span at residues 364–384 (VAIGSSIQISMFAVPFCVVIG). The Extracellular portion of the chain corresponds to 385 to 393 (WMMGAQMDL). A helical transmembrane segment spans residues 394–414 (NLQLFETATLLITVIVVAFFL). Topologically, residues 415-425 (QLEGTSNYFKR) are cytoplasmic. The chain crosses the membrane as a helical span at residues 426–446 (LMLILCYLIVAASFFVHEDPH). Residues 447-448 (QG) lie on the Extracellular side of the membrane.

Belongs to the Ca(2+):cation antiporter (CaCA) (TC 2.A.19) family. Cation/proton exchanger (CAX) subfamily.

The protein localises to the vacuole membrane. In terms of biological role, vacuolar cation/proton exchanger (CAX). Translocates Ca(2+) and other metal ions into vacuoles using the proton gradient formed by H(+)-ATPase and H(+)-pyrophosphatase. The polypeptide is Putative vacuolar cation/proton exchanger 6 (CAX6) (Arabidopsis thaliana (Mouse-ear cress)).